We begin with the raw amino-acid sequence, 335 residues long: Probable calcium-binding protein CML49 (335 aa).

Low complexity predominate over residues 1-10 (MSGYPPSSQG). Residues 1–154 (MSGYPPSSQG…PQASYGSPFA (154 aa)) are disordered. The segment covering 30–45 (NPPPYGSSGSNPPPPY) has biased composition (pro residues). Residues 46–63 (GSSASSPYAVPYGAQPAP) show a composition bias toward low complexity. Residues 110–141 (DYGGYGGAPQQSGHGGGYGGAPQQSGHGGGYG) are compositionally biased toward gly residues. EF-hand domains follow at residues 164 to 199 (GTDP…YNQS) and 230 to 265 (FSLQ…LGFS). Ca(2+) is bound by residues D177, D179, S181, E188, D243, D245, S247, R249, and E254.

Potential calcium sensor. This Arabidopsis thaliana (Mouse-ear cress) protein is Probable calcium-binding protein CML49 (CML49).